The following is a 458-amino-acid chain: MVIVWYHQLLLVLLIFIGAAKGAQYIGSGASQPNRTDVVWMVPSWTCKNEYSIDVEKYGILQNEDQHFVGGKQFAIFYEHSFGKIPYFKAQNESDPKNGGLPQMGDLEAHLIQAEKDINETIPDENFNGIAVIDIEEFRPMWELSWGPFSVYKTESIRLTRQQHPYWSTKQIEWQAERDYEKACQKFFIETLRLGKRLRPNAKWGYYLFPKCNGDVGQKSDTDCSTLFQKFNDNLHWLWGESTALFPSIYLYPSQKQNPEYNFVNSGALITETKRIKRNYCPSCEIHVFTKIEYNPYYTPDDFYSKQNLASTLDLAIKMNANSVVIWSTSQSIGSRCGSLQTYVDNTLGPYLQLTDRNLDKCRMERCEGRGECYLPRPKTNPAIYNFACRCERPYFGKSCEYRGRRMGVSMPKASQTPQVIPDVTAYFSTSSNGTKKYNAPNQFYSRTGGDIKLARKL.

The signal sequence occupies residues 1 to 22 (MVIVWYHQLLLVLLIFIGAAKG). Residues 358 to 401 (NLDKCRMERCEGRGECYLPRPKTNPAIYNFACRCERPYFGKSCE) enclose the EGF-like domain. Disulfide bonds link C362-C373, C367-C389, and C391-C400.

It belongs to the glycosyl hydrolase 56 family.

Endo-beta-galactosaminidase that specifically hydrolyzes chondroitin, releasing GlcUA-beta-(1-&gt;3)-GalNAc-beta-(1-&gt;4)-GlcUA-beta-(1-&gt;3)-GalNAc as the main product. Also hydrolyzes to a lesser extent chondroitin sulfates (CS-A, CS-C) and hyaluronic acid. May regulate the function of chondroitin in cell division. In Caenorhabditis elegans, this protein is Chondroitin hydrolase.